The primary structure comprises 423 residues: Diels-Alderase cheD (423 aa).

The first 18 residues, Met1 to Ala18, serve as a signal peptide directing secretion. Asn84 and Asn132 each carry an N-linked (GlcNAc...) asparagine glycan.

It belongs to the Diels-Alderase family.

The protein operates within secondary metabolite biosynthesis. Functionally, diels-Alderase; part of the gene cluster that mediates the biosynthesis of chaetoglobosin A which has a unique inhibitory activity against actin polymerization in mammalian cells. Chaetoglobosin A and its intermediates are involved in the morphological differentiation of C.globosum. The first step of the pathway is the synthesis of prochaetoglobosin I via condensation of one acetyl-CoA, 8 malonyl-CoA, and a L-tryptophan molecule by the PKS-NRPS hybrid synthetase cheA, followed by reduction of backbone double bond to install desired geometry by the enoyl reductase cheB. Further multiple oxidation steps performed by the cytochrome P450 monooxygenases cheE and cheG, as well as by the FAD-linked oxidoreductase cheF, lead to the formation of chaetoglobosin A. Depending on the order of action of these reductases, distinct intermediates can be identified. Within the pathway, the cytochrome P450 monooxygenase cheE catalyzes a stereospecific epoxidation on prochaetoglobosin I, cytoglobosin D, and chaetoglobosin J intermediates. The FAD-linked oxidoreductase cheF performs dehydrogenation of the C-20 hydroxyl groups in the 20-dihyrochaetoglobosin A and cytoglobosin D intermediates. Finally, the cytochrome P450 monooxygenase cheG can catalyze the stereospecific dihydroxylation of prochaetoglobosin I and prochaetoglobosin IV at C-19 and C-20, respectively. The Diels-Alderase cheD may play a role in the post-PKS-NRPS biosynthetic steps catalyzing Diels-Alder cyclization. This chain is Diels-Alderase cheD, found in Chaetomium globosum (strain ATCC 6205 / CBS 148.51 / DSM 1962 / NBRC 6347 / NRRL 1970) (Soil fungus).